We begin with the raw amino-acid sequence, 309 residues long: MIYLAGGCFWGVEEYFSQVDGVLDAVSGYANGRGDTTNYQLIHQTGHAETVEVAYDTNRISLKELLLHFFRIIDPTSLNKQGNDRGSQYRTGIYYTDKADLAIIDEVFKEKAKDYKKKIVVEKAPLKHFIKAEDYHQDYLKKNPNGYCHIDINQATYPVIDESKYPKPSATEIKEKLSADEYRVTQKNETEKAFSNRYWDSFDAGIYVDVVTGEPLFSSKDKFESGCGWPSFSRPISPDVVRYKEDKSFNMTRTEVRSRSGNSHLGHVFTDGPKDQGGLRYCINSLSITFIPKADMEAKGYGYLLSSVE.

Residues 1–153 form a peptide methionine sulfoxide reductase A region; sequence MIYLAGGCFW…PNGYCHIDIN (153 aa). Residue Cys8 is part of the active site. The region spanning 170-293 is the MsrB domain; the sequence is ATEIKEKLSA…NSLSITFIPK (124 aa). The active-site Nucleophile is the Cys282.

In the N-terminal section; belongs to the MsrA Met sulfoxide reductase family. The protein in the C-terminal section; belongs to the MsrB Met sulfoxide reductase family.

The enzyme catalyses L-methionyl-[protein] + [thioredoxin]-disulfide + H2O = L-methionyl-(S)-S-oxide-[protein] + [thioredoxin]-dithiol. It catalyses the reaction [thioredoxin]-disulfide + L-methionine + H2O = L-methionine (S)-S-oxide + [thioredoxin]-dithiol. It carries out the reaction L-methionyl-[protein] + [thioredoxin]-disulfide + H2O = L-methionyl-(R)-S-oxide-[protein] + [thioredoxin]-dithiol. In terms of biological role, has an important function as a repair enzyme for proteins that have been inactivated by oxidation. Catalyzes the reversible oxidation-reduction of methionine sulfoxide in proteins to methionine. This is Peptide methionine sulfoxide reductase MsrA/MsrB (msrAB) from Streptococcus pyogenes serotype M18 (strain MGAS8232).